A 115-amino-acid polypeptide reads, in one-letter code: Large ribosomal subunit protein bL19 (115 aa).

It belongs to the bacterial ribosomal protein bL19 family.

In terms of biological role, this protein is located at the 30S-50S ribosomal subunit interface and may play a role in the structure and function of the aminoacyl-tRNA binding site. This Nitrosococcus oceani (strain ATCC 19707 / BCRC 17464 / JCM 30415 / NCIMB 11848 / C-107) protein is Large ribosomal subunit protein bL19.